The sequence spans 289 residues: Protease HtpX (289 aa).

2 consecutive transmembrane segments (helical) span residues 5 to 25 (IVLF…VMSL) and 33 to 53 (MSGL…ISLL). Histidine 140 serves as a coordination point for Zn(2+). Glutamate 141 is a catalytic residue. Histidine 144 lines the Zn(2+) pocket. Helical transmembrane passes span 155-175 (LLQG…GGFI) and 193-213 (GIVL…TMWF). A Zn(2+)-binding site is contributed by glutamate 218.

This sequence belongs to the peptidase M48B family. Zn(2+) is required as a cofactor.

It localises to the cell inner membrane. The protein is Protease HtpX of Xylella fastidiosa (strain M23).